A 392-amino-acid chain; its full sequence is Probable tRNA sulfurtransferase (392 aa).

In terms of domain architecture, THUMP spans 63–169 (GRAADAAADT…DAEAFVFLTH (107 aa)). Residues 187-188 (LV), R270, G292, and Q301 each bind ATP.

The protein belongs to the ThiI family.

The protein localises to the cytoplasm. The catalysed reaction is [ThiI sulfur-carrier protein]-S-sulfanyl-L-cysteine + a uridine in tRNA + 2 reduced [2Fe-2S]-[ferredoxin] + ATP + H(+) = [ThiI sulfur-carrier protein]-L-cysteine + a 4-thiouridine in tRNA + 2 oxidized [2Fe-2S]-[ferredoxin] + AMP + diphosphate. The enzyme catalyses [ThiS sulfur-carrier protein]-C-terminal Gly-Gly-AMP + S-sulfanyl-L-cysteinyl-[cysteine desulfurase] + AH2 = [ThiS sulfur-carrier protein]-C-terminal-Gly-aminoethanethioate + L-cysteinyl-[cysteine desulfurase] + A + AMP + 2 H(+). It participates in cofactor biosynthesis; thiamine diphosphate biosynthesis. Its function is as follows. Catalyzes the ATP-dependent transfer of a sulfur to tRNA to produce 4-thiouridine in position 8 of tRNAs, which functions as a near-UV photosensor. Also catalyzes the transfer of sulfur to the sulfur carrier protein ThiS, forming ThiS-thiocarboxylate. This is a step in the synthesis of thiazole, in the thiamine biosynthesis pathway. The sulfur is donated as persulfide by IscS. This is Probable tRNA sulfurtransferase from Halobacterium salinarum (strain ATCC 29341 / DSM 671 / R1).